The chain runs to 531 residues: Galactose/methyl galactoside import permease protein MglC (531 aa).

The next 10 membrane-spanning stretches (helical) occupy residues 193–213, 239–259, 267–287, 300–320, 326–346, 376–396, 424–444, 461–481, 483–503, and 505–525; these read FFLA…CIVV, MFYA…LSIG, VVTG…GLGP, VMSL…AGFF, IHPF…LFFG, LVTF…AWFI, FGVT…GAFF, LDAI…IGKL, GAVV…FLGI, and TNLQ…LDSV.

Belongs to the binding-protein-dependent transport system permease family. AraH/RbsC subfamily. As to quaternary structure, the complex is composed of one ATP-binding protein (MglA), two transmembrane proteins (MglC) and a solute-binding protein (MglB).

It localises to the cell membrane. Functionally, part of the ABC transporter complex MglABC involved in galactose/methyl galactoside import. Probably responsible for the translocation of the substrate across the membrane. This is Galactose/methyl galactoside import permease protein MglC (mglC) from Treponema pallidum (strain Nichols).